A 659-amino-acid polypeptide reads, in one-letter code: Pollen receptor-like kinase 6 (659 aa).

Positions 1-26 (MAAAVLNPGFFLLILLLSFSISPSLQ) are cleaved as a signal peptide. The Extracellular segment spans residues 27 to 266 (YVSESEPLVR…SVPETSNKAA (240 aa)). Cysteines 58 and 67 form a disulfide. LRR repeat units follow at residues 95 to 118 (LPNL…FFKL), 120 to 142 (GLKS…FFKD), 143 to 167 (MSKL…ITQL), 168 to 190 (PQLE…EFGS), and 192 to 214 (KNLK…SIAD). An N-linked (GlcNAc...) asparagine glycan is attached at asparagine 128. N-linked (GlcNAc...) asparagine glycosylation occurs at asparagine 179. N-linked (GlcNAc...) asparagine glycosylation is present at asparagine 221. The tract at residues 226–242 (EYLCGPVVDVGCENIEL) is LURE peptides binding. Cysteines 229 and 237 form a disulfide. The tract at residues 241 to 260 (ELNDPQEGQPPSKPSSSVPE) is disordered. Residues 267–287 (INAIMVSISLLLLFFIIVGVI) form a helical membrane-spanning segment. Residues 288-659 (KRRNKKKNPD…AVRRIEQVKT (372 aa)) are Cytoplasmic-facing. Residues 312–354 (VRISESSSTTAKRSTDSSRKRGGHSDDGSTKKGVSNIGKGGNG) form a disordered region. Positions 324 to 341 (RSTDSSRKRGGHSDDGST) are enriched in basic and acidic residues. The region spanning 384 to 659 (KAAAEVLGNG…AVRRIEQVKT (276 aa)) is the Protein kinase domain. ATP is bound by residues 390–398 (LGNGSLGSA) and lysine 412. Phosphoserine is present on serine 464. Threonine 484 and threonine 557 each carry phosphothreonine. Serine 561 is subject to Phosphoserine.

It belongs to the protein kinase superfamily. Ser/Thr protein kinase family. Interacts with ROPGEF8, ROPGEF9, ROPGEF12, ROPGEF13, PRK3, LIP1 and LIP2. Binds to LURE peptides via its LRR repeats; interacts with LURE1.1, LURE1.2, LURE1.3 and LURE1.4. As to expression, expressed specifically in the pollen tube, predominantly at the tip.

It is found in the cell membrane. The protein localises to the cytoplasmic granule. Its function is as follows. Key receptor for sensing species-specific attractants in cooperation with other pollen receptor-like kinases. Essential for pollen tube reorientation toward attractant peptides. The sequence is that of Pollen receptor-like kinase 6 from Arabidopsis thaliana (Mouse-ear cress).